A 242-amino-acid polypeptide reads, in one-letter code: Probable septum site-determining protein MinC (242 aa).

The protein belongs to the MinC family. As to quaternary structure, interacts with MinD and FtsZ.

Functionally, cell division inhibitor that blocks the formation of polar Z ring septums. Rapidly oscillates between the poles of the cell to destabilize FtsZ filaments that have formed before they mature into polar Z rings. Prevents FtsZ polymerization. In Brucella anthropi (strain ATCC 49188 / DSM 6882 / CCUG 24695 / JCM 21032 / LMG 3331 / NBRC 15819 / NCTC 12168 / Alc 37) (Ochrobactrum anthropi), this protein is Probable septum site-determining protein MinC.